We begin with the raw amino-acid sequence, 365 residues long: Phospho-N-acetylmuramoyl-pentapeptide-transferase (365 aa).

A run of 10 helical transmembrane segments spans residues 22 to 42 (YVSV…LFLG), 74 to 94 (TMGG…WGSL), 95 to 115 (SSIY…IGFF), 134 to 154 (KFAL…YLLS), 169 to 189 (LHIP…INGS), 201 to 221 (GLAI…AYIQ), 240 to 260 (LAEV…FLWF), 268 to 288 (FMGD…AVMI), 292 to 312 (LIFF…MLQV), and 342 to 362 (KVVI…LVAI).

It belongs to the glycosyltransferase 4 family. MraY subfamily. Mg(2+) is required as a cofactor.

Its subcellular location is the cell inner membrane. It catalyses the reaction UDP-N-acetyl-alpha-D-muramoyl-L-alanyl-gamma-D-glutamyl-meso-2,6-diaminopimeloyl-D-alanyl-D-alanine + di-trans,octa-cis-undecaprenyl phosphate = di-trans,octa-cis-undecaprenyl diphospho-N-acetyl-alpha-D-muramoyl-L-alanyl-D-glutamyl-meso-2,6-diaminopimeloyl-D-alanyl-D-alanine + UMP. It participates in cell wall biogenesis; peptidoglycan biosynthesis. Its function is as follows. Catalyzes the initial step of the lipid cycle reactions in the biosynthesis of the cell wall peptidoglycan: transfers peptidoglycan precursor phospho-MurNAc-pentapeptide from UDP-MurNAc-pentapeptide onto the lipid carrier undecaprenyl phosphate, yielding undecaprenyl-pyrophosphoryl-MurNAc-pentapeptide, known as lipid I. This chain is Phospho-N-acetylmuramoyl-pentapeptide-transferase, found in Francisella philomiragia subsp. philomiragia (strain ATCC 25017 / CCUG 19701 / FSC 153 / O#319-036).